The chain runs to 776 residues: Protein phosphatase 1 regulatory subunit 21 (776 aa).

Coiled-coil stretches lie at residues 4–206, 432–466, and 555–597; these read GDLQ…LKTL, RLHD…TTND, and ESRE…KETL.

In terms of assembly, component of the FERRY complex.

It is found in the early endosome. Component of the FERRY complex (Five-subunit Endosomal Rab5 and RNA/ribosome intermediary). The FERRY complex directly interacts with mRNAs and RAB5A, and functions as a RAB5A effector involved in the localization and the distribution of specific mRNAs most likely by mediating their endosomal transport. The complex recruits mRNAs and ribosomes to early endosomes through direct mRNA-interaction. Putative regulator of protein phosphatase 1 (PP1) activity. May play a role in the endosomal sorting process or in endosome maturation pathway. This Xenopus laevis (African clawed frog) protein is Protein phosphatase 1 regulatory subunit 21 (ppp1r21).